A 464-amino-acid polypeptide reads, in one-letter code: Soluble pyridine nucleotide transhydrogenase (464 aa).

35–44 (DSRRQVGGNC) lines the FAD pocket.

It belongs to the class-I pyridine nucleotide-disulfide oxidoreductase family. Requires FAD as cofactor.

The protein localises to the cytoplasm. It carries out the reaction NAD(+) + NADPH = NADH + NADP(+). In terms of biological role, conversion of NADPH, generated by peripheral catabolic pathways, to NADH, which can enter the respiratory chain for energy generation. This chain is Soluble pyridine nucleotide transhydrogenase, found in Pseudomonas savastanoi pv. phaseolicola (strain 1448A / Race 6) (Pseudomonas syringae pv. phaseolicola (strain 1448A / Race 6)).